The following is a 187-amino-acid chain: MEVILLERIEKLGQMGDVVNVKPGFARNFLLPQKKALRASKANLAFFEKQRVQLEALNLKRRDEAQAVADKMTGLSVLMVRQAGESGMLYGSVSGKDVADAVKAAGFTIERRMVNLDQPIKTLGSYGVRVSLHPEVSVVVTINVARSAEEAERAAAAAAAAAEVVEAEEAPAEEDVAAEETSEAAEA.

The segment at 168–187 (EEAPAEEDVAAEETSEAAEA) is disordered.

It belongs to the bacterial ribosomal protein bL9 family.

Its function is as follows. Binds to the 23S rRNA. In Paramagnetospirillum magneticum (strain ATCC 700264 / AMB-1) (Magnetospirillum magneticum), this protein is Large ribosomal subunit protein bL9.